A 61-amino-acid chain; its full sequence is Large ribosomal subunit protein bL32 (61 aa).

Basic residues predominate over residues 1–16 (MAVPRRKTSPSRRGMR). Residues 1 to 61 (MAVPRRKTSP…RQVLKAKSDS (61 aa)) are disordered. Basic and acidic residues predominate over residues 27-44 (YAEDKDSGELRRPHHLDL).

Belongs to the bacterial ribosomal protein bL32 family.

This Nitrobacter winogradskyi (strain ATCC 25391 / DSM 10237 / CIP 104748 / NCIMB 11846 / Nb-255) protein is Large ribosomal subunit protein bL32.